The following is a 231-amino-acid chain: Acyltransferase PGAP2 (231 aa).

Topologically, residues Met1–Arg22 are cytoplasmic. Residues Leu23–Met43 traverse the membrane as a helical segment. Over Leu44 to Arg78 the chain is Lumenal. The helical transmembrane segment at Phe79–Tyr99 threads the bilayer. Topologically, residues Arg100 to Gln110 are cytoplasmic. Residues Leu111–Thr131 form a helical membrane-spanning segment. Over Tyr132–Phe146 the chain is Lumenal. A helical membrane pass occupies residues Ile147–Ile167. Residues Val168–Ser179 are Cytoplasmic-facing. A helical transmembrane segment spans residues Tyr180 to Phe200. Topologically, residues Tyr201–Thr231 are lumenal.

The protein belongs to the PGAP2 family.

The protein resides in the golgi apparatus membrane. Its function is as follows. Involved in the fatty acid remodeling steps of GPI-anchor maturation where the unsaturated acyl chain at sn-2 of inositol phosphate is replaced by a saturated stearoyl chain. May catalyze the second step of the fatty acid remodeling, by reacylating a lyso-GPI intermediate at sn-2 of inositol phosphate by a saturated chain. The fatty acid remodeling steps is critical for the integration of GPI-APs into lipid rafts. This is Acyltransferase PGAP2 from Danio rerio (Zebrafish).